The chain runs to 174 residues: Ribosome maturation factor RimM (174 aa).

A PRC barrel domain is found at 99–172; it reads ADEFFYHDVI…RLVIRPIAGL (74 aa).

The protein belongs to the RimM family. As to quaternary structure, binds ribosomal protein uS19.

It localises to the cytoplasm. Functionally, an accessory protein needed during the final step in the assembly of 30S ribosomal subunit, possibly for assembly of the head region. Essential for efficient processing of 16S rRNA. May be needed both before and after RbfA during the maturation of 16S rRNA. It has affinity for free ribosomal 30S subunits but not for 70S ribosomes. The protein is Ribosome maturation factor RimM of Chloroflexus aurantiacus (strain ATCC 29366 / DSM 635 / J-10-fl).